Consider the following 975-residue polypeptide: DNA primase (975 aa).

The segment at 919 to 958 (CIQHDHRDGRENVQFFLDFRPESATTIWTTLWSRCFSRKC) adopts a CHC2-type zinc-finger fold.

It belongs to the herpesviridae DNA primase family. In terms of assembly, associates with the helicase and the primase-associated factor to form the helicase-primase factor.

The protein localises to the host nucleus. Its function is as follows. Essential component of the helicase/primase complex. Unwinds the DNA at the replication forks and generates single-stranded DNA for both leading and lagging strand synthesis. The primase initiates primer synthesis and thereby produces large amount of short RNA primers on the lagging strand that the polymerase elongates using dNTPs. This Elephas maximus (Indian elephant) protein is DNA primase.